Reading from the N-terminus, the 447-residue chain is MNAWEVNFDGLVGLTHHYAGLSFGNEASTRHRFQVSNPRQAAKQGLLKMKTLADAGFPQAVIPPHERPFIPVLRQLGFSGSDEQVLEKVARQAPHWLSSVSSASPMWVANAATIAPSADTLDGKVHFTVANLNNKFHRSLEALVTESLLKAIFNDEEKFSVHSALPQVALLGDEGAANHNRLGGHYGEPGMQLFVYGREEGNDTRPSRYPARQTREASEAVARLNQVNPQQVIFAQQNPDVIDQGVFHNDVIAVSNRQVLFCHQQAFARQSQLLANLRARVNGFMAIEVPATQVSVSDTVSTYLFNSQLLSRDDGSMMLVLPQECREHAGVWGYLNELLAADNPISELKVFDLRESMANGGGPACLRLRVVLTEEERRAVNPAVMMNDTLFNALNDWVDRYYRDRLTAADLADPQLLREGREALDVLSQLLNLGSVYPFQREGGGNG.

Substrate-binding positions include 19-28, N110, and 137-138; these read AGLSFGNEAS and HR. Residue E174 is part of the active site. Residue R212 coordinates substrate. H248 is a catalytic residue. Residues D250 and N359 each contribute to the substrate site. C365 serves as the catalytic Nucleophile.

This sequence belongs to the succinylarginine dihydrolase family. As to quaternary structure, homodimer.

It catalyses the reaction N(2)-succinyl-L-arginine + 2 H2O + 2 H(+) = N(2)-succinyl-L-ornithine + 2 NH4(+) + CO2. It participates in amino-acid degradation; L-arginine degradation via AST pathway; L-glutamate and succinate from L-arginine: step 2/5. Catalyzes the hydrolysis of N(2)-succinylarginine into N(2)-succinylornithine, ammonia and CO(2). The sequence is that of N-succinylarginine dihydrolase from Escherichia coli O9:H4 (strain HS).